The following is a 159-amino-acid chain: SsrA-binding protein (159 aa).

Belongs to the SmpB family.

Its subcellular location is the cytoplasm. Required for rescue of stalled ribosomes mediated by trans-translation. Binds to transfer-messenger RNA (tmRNA), required for stable association of tmRNA with ribosomes. tmRNA and SmpB together mimic tRNA shape, replacing the anticodon stem-loop with SmpB. tmRNA is encoded by the ssrA gene; the 2 termini fold to resemble tRNA(Ala) and it encodes a 'tag peptide', a short internal open reading frame. During trans-translation Ala-aminoacylated tmRNA acts like a tRNA, entering the A-site of stalled ribosomes, displacing the stalled mRNA. The ribosome then switches to translate the ORF on the tmRNA; the nascent peptide is terminated with the 'tag peptide' encoded by the tmRNA and targeted for degradation. The ribosome is freed to recommence translation, which seems to be the essential function of trans-translation. The sequence is that of SsrA-binding protein from Actinobacillus pleuropneumoniae serotype 5b (strain L20).